Consider the following 418-residue polypeptide: Delta(14)-sterol reductase TM7SF2 (418 aa).

The next 6 helical transmembrane spans lie at 13–35 (FGGP…HLLL), 62–81 (ALLL…LLPA), 102–124 (GFQA…LPLG), 129–148 (MLLP…SLLL), 255–277 (FGFM…QAQF), and 287–304 (LPMA…YYIF). NADP(+)-binding positions include K311, R315, L338, W343, and 350 to 351 (NY). The helical transmembrane segment at 355 to 377 (LIMALAWSLPCGLSHLLPYFYVL) threads the bilayer. Residues D390, 394 to 398 (CLQKY), and Y405 each bind NADP(+).

The protein belongs to the ERG4/ERG24 family. Strongly expressed in liver, weaker in ovary, testis, kidney and brain.

It is found in the endoplasmic reticulum membrane. The protein resides in the microsome membrane. The catalysed reaction is 4,4-dimethyl-5alpha-cholesta-8,24-dien-3beta-ol + NADP(+) = 4,4-dimethyl-5alpha-cholesta-8,14,24-trien-3beta-ol + NADPH + H(+). The enzyme catalyses 5alpha-cholest-8,14-dien-3beta-ol + NADPH + H(+) = 5alpha-cholest-8-en-3beta-ol + NADP(+). It carries out the reaction 4,4-dimethyl-8,14-cholestadien-3beta-ol + NADPH + H(+) = 4,4-dimethyl-5alpha-cholest-8-en-3beta-ol + NADP(+). The protein operates within steroid biosynthesis; cholesterol biosynthesis. Its function is as follows. Catalyzes the reduction of the C14-unsaturated bond of lanosterol, as part of the metabolic pathway leading to cholesterol biosynthesis. The protein is Delta(14)-sterol reductase TM7SF2 (Tm7sf2) of Mus musculus (Mouse).